We begin with the raw amino-acid sequence, 2150 residues long: Zinc finger protein sdc-3 (2150 aa).

The tract at residues 443–987 is dosage compensation domain 1; that stretch reads QEITSPMFAL…DQVENEEPER (545 aa). 4 disordered regions span residues 874–894, 1261–1373, 1411–1448, and 1491–1670; these read EKEW…EEED, GSVV…GPEV, FETS…GPIN, and EVLQ…SEKL. Over residues 1267-1293 the composition is skewed to polar residues; it reads TNQQEENVTSEGPTLQEGSSIPSSSHI. The segment covering 1321–1333 has biased composition (basic residues); the sequence is KKSGKTTRGRPKK. A compositionally biased stretch (basic and acidic residues) spans 1347–1357; sequence GQKEEAAHEPE. Positions 1504–1524 are enriched in basic residues; sequence SSKKRGRRRKKTPPHIAKARK. Residues 1508–1516 are sex determination domain; that stretch reads RGRRRKKTP. A compositionally biased stretch (basic and acidic residues) spans 1585 to 1598; it reads EDLHETERPGHVGE. Residues 1638–1648 are compositionally biased toward polar residues; that stretch reads IQSQAGTNASP. 2 consecutive C2H2-type zinc fingers follow at residues 2078-2105 and 2117-2141; these read HKCV…GKLH and DDCQ…NHHH. The interval 2080–2105 is dosage compensation domain 2; the sequence is CVQCSIRNQSVYFSSYSLLELHGKLH.

In terms of assembly, component of the SDC complex, which consists of sdc-1, sdc-2 and sdc-3. Within the complex, interacts with sdc-1 and sdc-2. Interacts with dpy-21. In terms of processing, sumoylated. Sumoylation is important for assembly of the dosage compensation complex and its robust binding to the X chromosome. As to expression, expressed in somatic and in germline tissues in hermaphrodites (XX). In males (XO), only present in embryos younger than the 100-cell stage (at protein level).

The protein resides in the chromosome. The protein localises to the nucleus. Component of the SDC complex that functions in sex determination and in X chromosome dosage compensation specifically in hermaphrodite (XX) animals. Plays a central role in the recruitment of the condensin I-like dosage compensation complex to the male sex-determining autosomal gene her-1, thereby contributing to its repression and initiating hermaphrodite sexual development. Involved in the recruitment and assembly of the dosage compensation complex and the dosage compensation protein dpy-21 onto the X chromosomes in hermaphrodites, which leads to a reduction of X-linked gene transcription and an equalization of X-linked gene expression between the sexes. The chain is Zinc finger protein sdc-3 (sdc-3) from Caenorhabditis elegans.